A 275-amino-acid polypeptide reads, in one-letter code: NH(3)-dependent NAD(+) synthetase (275 aa).

46 to 53 is an ATP binding site; it reads GISGGQDS. Asp-52 serves as a coordination point for Mg(2+). Residue Arg-140 coordinates deamido-NAD(+). Thr-160 serves as a coordination point for ATP. Position 165 (Glu-165) interacts with Mg(2+). Lys-173 and Asp-180 together coordinate deamido-NAD(+). 2 residues coordinate ATP: Lys-189 and Thr-211. Position 260–261 (260–261) interacts with deamido-NAD(+); sequence HK.

The protein belongs to the NAD synthetase family. As to quaternary structure, homodimer.

It catalyses the reaction deamido-NAD(+) + NH4(+) + ATP = AMP + diphosphate + NAD(+) + H(+). Its pathway is cofactor biosynthesis; NAD(+) biosynthesis; NAD(+) from deamido-NAD(+) (ammonia route): step 1/1. Functionally, catalyzes the ATP-dependent amidation of deamido-NAD to form NAD. Uses ammonia as a nitrogen source. This chain is NH(3)-dependent NAD(+) synthetase, found in Escherichia coli (strain K12 / MC4100 / BW2952).